The sequence spans 475 residues: Beta-amyrin 6-beta-monooxygenase (475 aa).

The helical transmembrane segment at 6–22 (LYSLAFALVYISLYFIF) threads the bilayer. Position 423 (C423) interacts with heme.

Belongs to the cytochrome P450 family. Heme serves as cofactor. In terms of tissue distribution, specifically expressed in roots.

It is found in the membrane. It carries out the reaction beta-amyrin + reduced [NADPH--hemoprotein reductase] + O2 = daturadiol + oxidized [NADPH--hemoprotein reductase] + H2O + H(+). In terms of biological role, catalyzes the C-6 beta-hydroxylation of beta-amyrin to form daturadiol. Catalyzes the C-6 beta-hydroxylation of alpha-amyrin to form 6-beta-hydroxy-alpha-amyrin. The polypeptide is Beta-amyrin 6-beta-monooxygenase (Solanum lycopersicum (Tomato)).